A 96-amino-acid chain; its full sequence is uncharacterized protein (96 aa).

Residues 1-23 form the signal peptide; it reads MKQFYSVVLTIIIYISSQSNVVS. 3 disulfides stabilise this stretch: Cys60–Cys74, Cys67–Cys78, and Cys73–Cys83.

The protein localises to the secreted. This is an uncharacterized protein from Schistosoma japonicum (Blood fluke).